Consider the following 646-residue polypeptide: Threonine--tRNA ligase (646 aa).

The TGS domain maps to 1-63; that stretch reads MAQISLTFPD…ETDAKIAIHT (63 aa). The catalytic stretch occupies residues 247 to 544; that stretch reads DHRKLGREME…LIENYAGKLP (298 aa). Cys-344, His-395, and His-521 together coordinate Zn(2+).

The protein belongs to the class-II aminoacyl-tRNA synthetase family. Homodimer. Requires Zn(2+) as cofactor.

The protein localises to the cytoplasm. The catalysed reaction is tRNA(Thr) + L-threonine + ATP = L-threonyl-tRNA(Thr) + AMP + diphosphate + H(+). Its function is as follows. Catalyzes the attachment of threonine to tRNA(Thr) in a two-step reaction: L-threonine is first activated by ATP to form Thr-AMP and then transferred to the acceptor end of tRNA(Thr). Also edits incorrectly charged L-seryl-tRNA(Thr). The protein is Threonine--tRNA ligase of Cereibacter sphaeroides (strain ATCC 17023 / DSM 158 / JCM 6121 / CCUG 31486 / LMG 2827 / NBRC 12203 / NCIMB 8253 / ATH 2.4.1.) (Rhodobacter sphaeroides).